A 484-amino-acid polypeptide reads, in one-letter code: MKLIVKTFQEITIKSRPVRKRFIRQLAKNIRAVLRDLDPELKVEGEWDNLEVETAVVDARVRREMIERLTCTPGIGHFLEVHEYPLGDFDDILAKCKAHFGDQLAGKMFAVRCKRAGKHAFTSMEVERYVGSGLRRECGAAGIDLKQPEVEVRMEIRLDRLFVIHRQHPGLGGYPLGALEQVLVLMSGGFDSTVAAYQMMRRGMISHFVFFNLGGRAHELGVMEVAHYLWEKYGRSQRVLFVSVPFEEVVGEILTKVDDSYMGVTLKRMMLRAASRVAERLELDALVTGEAISQVSSQTLPNLSVIDRVTDTLVLRPLIVSHKQDIIDTARQIGTAEFARHMPEYCGVISVNPTTQAKPYRVEHEESKFDMAVLERALERATQRTVDRVIDELGQDLSVEEVAEVLPGQIVIDIRHPDAQEDEPLALEGVEVQALPFYAINSRFKELDANRQYLLYCDKGVMSRLHAHHLLNEGHTNVRVYRPA.

Positions arginine 63–glutamine 167 constitute a THUMP domain. ATP is bound by residues leucine 185–methionine 186, lysine 267, glycine 289, and glutamine 298. Cysteine 346 and cysteine 457 are oxidised to a cystine. In terms of domain architecture, Rhodanese spans valine 405–proline 483. The Cysteine persulfide intermediate role is filled by cysteine 457.

The protein belongs to the ThiI family.

The protein resides in the cytoplasm. It catalyses the reaction [ThiI sulfur-carrier protein]-S-sulfanyl-L-cysteine + a uridine in tRNA + 2 reduced [2Fe-2S]-[ferredoxin] + ATP + H(+) = [ThiI sulfur-carrier protein]-L-cysteine + a 4-thiouridine in tRNA + 2 oxidized [2Fe-2S]-[ferredoxin] + AMP + diphosphate. The enzyme catalyses [ThiS sulfur-carrier protein]-C-terminal Gly-Gly-AMP + S-sulfanyl-L-cysteinyl-[cysteine desulfurase] + AH2 = [ThiS sulfur-carrier protein]-C-terminal-Gly-aminoethanethioate + L-cysteinyl-[cysteine desulfurase] + A + AMP + 2 H(+). It participates in cofactor biosynthesis; thiamine diphosphate biosynthesis. Functionally, catalyzes the ATP-dependent transfer of a sulfur to tRNA to produce 4-thiouridine in position 8 of tRNAs, which functions as a near-UV photosensor. Also catalyzes the transfer of sulfur to the sulfur carrier protein ThiS, forming ThiS-thiocarboxylate. This is a step in the synthesis of thiazole, in the thiamine biosynthesis pathway. The sulfur is donated as persulfide by IscS. This is tRNA sulfurtransferase from Pseudomonas paraeruginosa (strain DSM 24068 / PA7) (Pseudomonas aeruginosa (strain PA7)).